A 273-amino-acid chain; its full sequence is Undecaprenyl-diphosphatase (273 aa).

The next 7 membrane-spanning stretches (helical) occupy residues 4–24 (LILIKAFLLGIVEGLTEFLPI), 43–63 (KAQVFTVAIQLGAILSVCWEY), 82–102 (FVLNLCVAFLPAAILGLLFIK), 108–128 (LFHPLPVAIALVTGGVLILWA), 183–203 (AAEFSFFLAIPIMFAATFYDV), 217–237 (MFVVGSIAAFISALIAIRGFI), and 253–273 (IGFGLIVLLTAHFGLINWSAG).

This sequence belongs to the UppP family.

The protein localises to the cell inner membrane. The enzyme catalyses di-trans,octa-cis-undecaprenyl diphosphate + H2O = di-trans,octa-cis-undecaprenyl phosphate + phosphate + H(+). Functionally, catalyzes the dephosphorylation of undecaprenyl diphosphate (UPP). Confers resistance to bacitracin. This Nitrosomonas eutropha (strain DSM 101675 / C91 / Nm57) protein is Undecaprenyl-diphosphatase.